The following is a 975-amino-acid chain: Glycine dehydrogenase (decarboxylating) (975 aa).

An N6-(pyridoxal phosphate)lysine modification is found at Lys-723.

This sequence belongs to the GcvP family. The glycine cleavage system is composed of four proteins: P, T, L and H. Pyridoxal 5'-phosphate is required as a cofactor.

It catalyses the reaction N(6)-[(R)-lipoyl]-L-lysyl-[glycine-cleavage complex H protein] + glycine + H(+) = N(6)-[(R)-S(8)-aminomethyldihydrolipoyl]-L-lysyl-[glycine-cleavage complex H protein] + CO2. The glycine cleavage system catalyzes the degradation of glycine. The P protein binds the alpha-amino group of glycine through its pyridoxal phosphate cofactor; CO(2) is released and the remaining methylamine moiety is then transferred to the lipoamide cofactor of the H protein. In Burkholderia mallei (strain NCTC 10247), this protein is Glycine dehydrogenase (decarboxylating).